We begin with the raw amino-acid sequence, 614 residues long: Nuclear receptor subfamily 1 group D member 1 (614 aa).

Over residues 1 to 12 (MTTLDSNNNTGG) the composition is skewed to polar residues. Residues 1-70 (MTTLDSNNNT…TQDPARSFGS (70 aa)) are required for phosphorylation by CSNK1E and cytoplasmic localization. Residues 1–119 (MTTLDSNNNT…SSRVSPSKST (119 aa)) form a disordered region. The segment at 1–128 (MTTLDSNNNT…TSNITKLNGM (128 aa)) is modulating. Residues 14 to 34 (ITYIGSSGSSPSRTSPESLYS) are compositionally biased toward low complexity. Polar residues predominate over residues 35–48 (DNSNGSFQSLTQGC). Residues 49-284 (PTYFPPSPTG…PPRSPSPEPT (236 aa)) form a crucial for activation of GJA1 region. Ser-55 and Ser-59 each carry phosphoserine; by GSK3-beta. Over residues 69–102 (GSIPPSLSDDGSPSSSSSSSSSSSSFYNGSPPGS) the composition is skewed to low complexity. A DNA-binding region (nuclear receptor) is located at residues 129–205 (VLLCKVCGDV…VGMSRDAVRF (77 aa)). NR C4-type zinc fingers lie at residues 132-152 (CKVCGDVASGFHYGVHACEGC) and 169-193 (CLKNENCSIVRINRNRCQQCRFKKC). Residues Lys-191 and Lys-192 each carry the N6-acetyllysine; by KAT5 modification. The segment covering 233–243 (SQCPLETSPTQ) has biased composition (polar residues). 2 disordered regions span residues 233-285 (SQCP…EPTV) and 311-345 (PGNFNANHASGSPPATTPHRWENQGCPPAPNDNNT). Residues 244 to 261 (HPTPGPMGPSPPPAPVPS) show a composition bias toward pro residues. A Phosphothreonine; by CDK1 modification is found at Thr-274. The region spanning 284-614 (TVEDVISQVA…KLLSFRVDAQ (331 aa)) is the NR LBD domain. Over residues 311 to 324 (PGNFNANHASGSPP) the composition is skewed to polar residues. N6-acetyllysine is present on Lys-400. Cys-418 provides a ligand contact to heme. Lys-591 carries the N6-acetyllysine modification. His-602 contributes to the heme binding site.

Belongs to the nuclear hormone receptor family. NR1 subfamily. In terms of assembly, binds DNA as a monomer or a homodimer. Interacts with C1D, NR2E3 and SP1. Interacts with OPHN1 (via C-terminus). Interacts with ZNHIT1. Interacts with PER2; the interaction associates PER2 to BMAL1 promoter region. Interacts with CRY1. Interacts with CCAR2. Interacts with SIAH2. Interacts with CDK1. Interacts with FBXW7. Interacts with HUWE1. Interacts with NR0B2. Interacts with NFIL3. Interacts (via domain NR LBD) with HSP90AA1 and HSP90AB1. Ubiquitinated, leading to its proteasomal degradation. Ubiquitinated by SIAH2; leading to its proteasomal degradation. Ubiquitinated by the SCF(FBXW7) complex when phosphorylated by CDK1 leading to its proteasomal degradation. Rapidly ubiquitinated in response to inflammatory triggers and sumoylation is a prerequisite to its ubiquitination. In terms of processing, sumoylated by UBE2I, desumoylated by SENP1, and sumoylation is a prerequisite to its ubiquitination. Post-translationally, phosphorylated by CSNK1E; phosphorylation enhances its cytoplasmic localization. Undergoes lysosome-mediated degradation in a time-dependent manner in the liver. As to expression, widely expressed. Expressed at high levels in the liver, adipose tissue, skeletal muscle and brain. Also expressed in endothelial cells (ECs), vascular smooth muscle cells (VSMCs) and macrophages. Expression oscillates diurnally in the suprachiasmatic nucleus (SCN) of the hypothalamus as well as in peripheral tissues. Expression increases during the differentiation of pre-adipocytes into mature adipocytes. Expressed at high levels in some squamous carcinoma cell lines.

Its subcellular location is the nucleus. It localises to the cytoplasm. It is found in the cell projection. The protein localises to the dendrite. The protein resides in the dendritic spine. Transcriptional repressor which coordinates circadian rhythm and metabolic pathways in a heme-dependent manner. Integral component of the complex transcription machinery that governs circadian rhythmicity and forms a critical negative limb of the circadian clock by directly repressing the expression of core clock components BMAL1, CLOCK and CRY1. Also regulates genes involved in metabolic functions, including lipid and bile acid metabolism, adipogenesis, gluconeogenesis and the macrophage inflammatory response. Acts as a receptor for heme which stimulates its interaction with the NCOR1/HDAC3 corepressor complex, enhancing transcriptional repression. Recognizes two classes of DNA response elements within the promoter of its target genes and can bind to DNA as either monomers or homodimers, depending on the nature of the response element. Binds as a monomer to a response element composed of the consensus half-site motif 5'-[A/G]GGTCA-3' preceded by an A/T-rich 5' sequence (RevRE), or as a homodimer to a direct repeat of the core motif spaced by two nucleotides (RevDR-2). Acts as a potent competitive repressor of ROR alpha (RORA) function and regulates the levels of its ligand heme by repressing the expression of PPARGC1A, a potent inducer of heme synthesis. Regulates lipid metabolism by repressing the expression of APOC3 and by influencing the activity of sterol response element binding proteins (SREBPs); represses INSIG2 which interferes with the proteolytic activation of SREBPs which in turn govern the rhythmic expression of enzymes with key functions in sterol and fatty acid synthesis. Regulates gluconeogenesis via repression of G6PC1 and PEPCK and adipocyte differentiation via repression of PPARG. Regulates glucagon release in pancreatic alpha-cells via the AMPK-NAMPT-SIRT1 pathway and the proliferation, glucose-induced insulin secretion and expression of key lipogenic genes in pancreatic-beta cells. Positively regulates bile acid synthesis by increasing hepatic expression of CYP7A1 via repression of NR0B2 and NFIL3 which are negative regulators of CYP7A1. Modulates skeletal muscle oxidative capacity by regulating mitochondrial biogenesis and autophagy; controls mitochondrial biogenesis and respiration by interfering with the STK11-PRKAA1/2-SIRT1-PPARGC1A signaling pathway. Represses the expression of SERPINE1/PAI1, an important modulator of cardiovascular disease and the expression of inflammatory cytokines and chemokines in macrophages. Represses gene expression at a distance in macrophages by inhibiting the transcription of enhancer-derived RNAs (eRNAs). Plays a role in the circadian regulation of body temperature and negatively regulates thermogenic transcriptional programs in brown adipose tissue (BAT); imposes a circadian oscillation in BAT activity, increasing body temperature when awake and depressing thermogenesis during sleep. In concert with NR2E3, regulates transcriptional networks critical for photoreceptor development and function. In addition to its activity as a repressor, can also act as a transcriptional activator. In the ovarian granulosa cells acts as a transcriptional activator of STAR which plays a role in steroid biosynthesis. In collaboration with SP1, activates GJA1 transcription in a heme-independent manner. Represses the transcription of CYP2B10, CYP4A10 and CYP4A14. Represses the transcription of CES2. Represses and regulates the circadian expression of TSHB in a NCOR1-dependent manner. Negatively regulates the protein stability of NR3C1 and influences the time-dependent subcellular distribution of NR3C1, thereby affecting its transcriptional regulatory activity. Plays a critical role in the circadian control of neutrophilic inflammation in the lung; under resting, non-stress conditions, acts as a rhythmic repressor to limit inflammatory activity whereas in the presence of inflammatory triggers undergoes ubiquitin-mediated degradation thereby relieving inhibition of the inflammatory response. Plays a key role in the circadian regulation of microglial activation and neuroinflammation; suppresses microglial activation through the NF-kappaB pathway in the central nervous system. Plays a role in the regulation of the diurnal rhythms of lipid and protein metabolism in the skeletal muscle via transcriptional repression of genes controlling lipid and amino acid metabolism in the muscle. The protein is Nuclear receptor subfamily 1 group D member 1 (NR1D1) of Homo sapiens (Human).